The following is a 317-amino-acid chain: DNA-directed RNA polymerase III subunit RPC6 (317 aa).

It belongs to the eukaryotic RPC34/RPC39 RNA polymerase subunit family. In terms of assembly, component of the RNA polymerase III (Pol III) complex consisting of 17 subunits. Interacts with BRF1/TDS4.

The protein localises to the nucleus. In terms of biological role, DNA-dependent RNA polymerase catalyzes the transcription of DNA into RNA using the four ribonucleoside triphosphates as substrates. Specific peripheric component of RNA polymerase III which synthesizes small RNAs, such as 5S rRNA and tRNAs. Involved in recruitment of Pol III to the preinitiation complex. Involved in the configuration of an initiation-competent form of RNA polymerase. In Saccharomyces cerevisiae (strain ATCC 204508 / S288c) (Baker's yeast), this protein is DNA-directed RNA polymerase III subunit RPC6 (RPC34).